Consider the following 309-residue polypeptide: Ribonuclease Z (309 aa).

Zn(2+)-binding residues include His-63, His-65, Asp-67, His-68, His-145, Asp-216, and His-274. The active-site Proton acceptor is Asp-67.

It belongs to the RNase Z family. As to quaternary structure, homodimer. Zn(2+) is required as a cofactor.

It catalyses the reaction Endonucleolytic cleavage of RNA, removing extra 3' nucleotides from tRNA precursor, generating 3' termini of tRNAs. A 3'-hydroxy group is left at the tRNA terminus and a 5'-phosphoryl group is left at the trailer molecule.. Zinc phosphodiesterase, which displays some tRNA 3'-processing endonuclease activity. Probably involved in tRNA maturation, by removing a 3'-trailer from precursor tRNA. This Streptococcus equi subsp. zooepidemicus (strain H70) protein is Ribonuclease Z.